Reading from the N-terminus, the 205-residue chain is Probable thymidylate kinase (205 aa).

7–14 (GIDGAGKS) serves as a coordination point for ATP.

This sequence belongs to the thymidylate kinase family.

It carries out the reaction dTMP + ATP = dTDP + ADP. The sequence is that of Probable thymidylate kinase from Thermococcus onnurineus (strain NA1).